The chain runs to 929 residues: MLFFADRSPFVRPLSGYAPVTPAAPRSTGSAAAPPPSPAVLDDRSGTEGDVTPMMAQYLAVKAAHPDCLLFYRMGDFYEMFFEDAVKAAETLDIALTKRGRHAGADIPMCGVPIHSHEGYLSRLIRAGIKVAICEQMEDPAEARRQRGYKAVVRRDVIRVVTAGTLTEDELLDARAHNYLAAVVRLRDAVGMAWVDVSTGDLVAQPLAEADIGPALARLAPGEVLMPEKLAGDPALREILAPLAGRISPLPASRFDSENARKRVEGLFGVKALDGFGGFGRAEVAAIGALIDYVELTQVGRLPRLSPPRRLSLGAILEIDGATRRNLELTETLGGGRKGSLLARIDCTVTGAGARLLAERLAAPLTDPAQIGARLDGVGFLVSAERVRGDLRDTLRGCPDIARALSRLSLGRGGPRDLAAIGEALSRIPALRVLVVGAGLGEPPTELTAALIDLGSHEGLVDLLGRALDADLPLLARDGGFIRPGYDAGLDELRALRDEGRRLIAGLQARYASETAIPALKIKHNNVLGYFIEVAAGRADKLMAAGGPFLHRQTLASQVRFTTVELSELEDKIRGAADKALALEQALFATLCAEVLGCAADIARAANGLACLDVAAALADLAARERYARPVVDNSTAFRIHKGRHPVVEAALADQAGPAFVANDCDLAPDQRLWLLTGPNMAGKSTFLRQNALIAVLAQMGSFVPAESAEIGVIDRLFSRVGAADDLARGRSTFMVEMVETAAILNQATERSLVILDEIGRGTATYDGLSIAWATVESLHDATRCRALFATHYHELTALASRLDRLSCHTLRIKEWKDQVVFLHEVGPGAADRSYGIHVAKLAGLPAAVIARAEQVLAILEKGDASSAATRLADDLPLFAAARPRAGLPTPPPGPHPLAEALNAINPDEMTPREALDALYRLKAVMKRE.

Positions 22–46 are disordered; it reads PAAPRSTGSAAAPPPSPAVLDDRSG. Over residues 23–32 the composition is skewed to low complexity; the sequence is AAPRSTGSAA. 678-685 is a binding site for ATP; the sequence is GPNMAGKS.

It belongs to the DNA mismatch repair MutS family.

Its function is as follows. This protein is involved in the repair of mismatches in DNA. It is possible that it carries out the mismatch recognition step. This protein has a weak ATPase activity. The protein is DNA mismatch repair protein MutS of Rhodospirillum rubrum (strain ATCC 11170 / ATH 1.1.1 / DSM 467 / LMG 4362 / NCIMB 8255 / S1).